The primary structure comprises 546 residues: Crossover junction endonuclease EME1A (546 aa).

Disordered stretches follow at residues methionine 1–glutamate 55 and valine 88–glutamine 232. Positions proline 28 to threonine 49 are enriched in polar residues. Composition is skewed to basic and acidic residues over residues serine 103–arginine 120 and aspartate 149–methionine 167. Positions threonine 173–alanine 183 are enriched in polar residues. The stretch at lysine 188–isoleucine 245 forms a coiled coil. Positions serine 192 to glutamine 232 are enriched in basic and acidic residues. The 201-residue stretch at asparagine 278–tyrosine 478 folds into the ERCC4 domain.

Belongs to the EME1/MMS4 family. Forms a heterodimer with MUS81. Mg(2+) serves as cofactor. Ca(2+) is required as a cofactor.

The protein localises to the nucleus. Interacts with MUS81 to form a DNA structure-specific endonuclease with substrate preference for branched DNA structures with a 5'-end at the branch nick. Typical substrates include 3'-flap structures, D-loops, replication forks, nicked Holliday junctions and also intact Holliday junctions with a reduced efficiency. May be required in mitosis for the processing of stalled or collapsed replication fork intermediates. Plays a role in DNA repair and in genotoxic stress-induced homologous recombination (HR) in somatic cells. Mediates a subset of meiotic recombination events that are insensitive to crossover interference. This Arabidopsis thaliana (Mouse-ear cress) protein is Crossover junction endonuclease EME1A (EME1A).